Here is a 313-residue protein sequence, read N- to C-terminus: Protoheme IX farnesyltransferase (313 aa).

Transmembrane regions (helical) follow at residues 33-53 (IALMKLRVVELLLVSTVPVML), 59-79 (MPSWWLIAVTLLAGTLSAGSA), 107-127 (VEPAQALRFGIALGIISTLMF), 129-149 (LLVNWTSAVLSVGAIAFYVFV), 162-182 (IVIGGAAGCFPVLIGWSAVTG), 188-208 (AVLLFAVVFFWTPPHFWALAI), 212-232 (DDYAAAGVPMLPVVATLEVVT), 252-272 (VADIGLVYLVPAVLLGAWFVA), and 292-312 (LFHMSITYLTLLFAALAAAAL).

The protein belongs to the UbiA prenyltransferase family. Protoheme IX farnesyltransferase subfamily.

The protein resides in the cell membrane. The enzyme catalyses heme b + (2E,6E)-farnesyl diphosphate + H2O = Fe(II)-heme o + diphosphate. It functions in the pathway porphyrin-containing compound metabolism; heme O biosynthesis; heme O from protoheme: step 1/1. Functionally, converts heme B (protoheme IX) to heme O by substitution of the vinyl group on carbon 2 of heme B porphyrin ring with a hydroxyethyl farnesyl side group. In Parafrankia sp. (strain EAN1pec), this protein is Protoheme IX farnesyltransferase.